Here is a 677-residue protein sequence, read N- to C-terminus: Methionine--tRNA ligase (677 aa).

The 'HIGH' region motif lies at 15–25; it reads PYANGSIHLGH. Positions 146, 149, 159, and 162 each coordinate Zn(2+). A 'KMSKS' region motif is present at residues 333-337; that stretch reads KMSKS. Lysine 336 contacts ATP. The tRNA-binding domain maps to 575–677; it reads DFAKIDLRVA…DGAKPGQQVK (103 aa).

Belongs to the class-I aminoacyl-tRNA synthetase family. MetG type 1 subfamily. Homodimer. Requires Zn(2+) as cofactor.

The protein localises to the cytoplasm. It carries out the reaction tRNA(Met) + L-methionine + ATP = L-methionyl-tRNA(Met) + AMP + diphosphate. Its function is as follows. Is required not only for elongation of protein synthesis but also for the initiation of all mRNA translation through initiator tRNA(fMet) aminoacylation. The sequence is that of Methionine--tRNA ligase from Salmonella paratyphi A (strain AKU_12601).